The chain runs to 362 residues: Beta-ketoacyl-[acyl-carrier-protein] synthase III 2 (362 aa).

Residues C113 and H251 contribute to the active site. Positions 252–256 (QANIR) are ACP-binding. N281 is a catalytic residue.

This sequence belongs to the thiolase-like superfamily. FabH family. Homodimer.

It localises to the cytoplasm. The enzyme catalyses malonyl-[ACP] + acetyl-CoA + H(+) = 3-oxobutanoyl-[ACP] + CO2 + CoA. It participates in lipid metabolism; fatty acid biosynthesis. Its function is as follows. Catalyzes the condensation reaction of fatty acid synthesis by the addition to an acyl acceptor of two carbons from malonyl-ACP. Catalyzes the first condensation reaction which initiates fatty acid synthesis and may therefore play a role in governing the total rate of fatty acid production. Possesses both acetoacetyl-ACP synthase and acetyl transacylase activities. Its substrate specificity determines the biosynthesis of branched-chain and/or straight-chain of fatty acids. In Vibrio cholerae serotype O1 (strain ATCC 39315 / El Tor Inaba N16961), this protein is Beta-ketoacyl-[acyl-carrier-protein] synthase III 2.